The chain runs to 255 residues: MAELRALVAVKRVIDFAVKIRVKPDKSGVVTDGVKHSMNPFCEIAVEEAVRLKEKKLVKEIIAVSCGPSQCQETIRTALAMGADRGIHVEIPGAQAESLGPLQVARVLAKLAEKEKVDLLFLGKQAIDDDCNQTGQMTAGLLDWPQGTFASQVTLEGDKVKVEREIDGGLETLRLKLPAVVTADLRLNEPRYATLPNIMKAKKKKIEVVKAGDLGVDLTSKVSVISVEEPPQRSAGVKVETTEDLVAKLKEVGRI.

N-acetylalanine is present on A2. Residues A9, 39-42, C66, and 123-134 contribute to the AMP site; these read NPFC and GKQAIDDDCNQT. The segment at 183–205 is recognition loop; sequence ADLRLNEPRYATLPNIMKAKKKK. K200 is subject to N6,N6,N6-trimethyllysine; by ETFBKMT; alternate. K200 carries the N6-acetyllysine; alternate modification. K200 bears the N6-methyllysine; alternate mark. K203 carries the N6,N6,N6-trimethyllysine; by ETFBKMT modification. The residue at position 210 (K210) is an N6-acetyllysine; alternate. K210 is subject to N6-succinyllysine; alternate. Phosphoserine occurs at positions 223 and 226. Residue K238 is modified to N6-acetyllysine. The residue at position 248 (K248) is an N6-acetyllysine; alternate. K248 is modified (N6-succinyllysine; alternate).

Belongs to the ETF beta-subunit/FixA family. Heterodimer composed of ETFA and ETFB. Identified in a complex that contains ETFA, ETFB and ETFRF1. Interacts with ACADM. Post-translationally, methylated. Trimethylation at Lys-200 and Lys-203 may negatively regulate the activity in electron transfer from acyl-CoA dehydrogenases.

It localises to the mitochondrion matrix. In terms of biological role, heterodimeric electron transfer flavoprotein that accepts electrons from several mitochondrial dehydrogenases, including acyl-CoA dehydrogenases, glutaryl-CoA and sarcosine dehydrogenase. It transfers the electrons to the main mitochondrial respiratory chain via ETF-ubiquinone oxidoreductase. Required for normal mitochondrial fatty acid oxidation and normal amino acid metabolism. ETFB binds an AMP molecule that probably has a purely structural role. The sequence is that of Electron transfer flavoprotein subunit beta from Mus musculus (Mouse).